The chain runs to 176 residues: Zinc finger A20 and AN1 domain-containing stress-associated protein 9 (176 aa).

Residues 16–50 (ASEPKLCVKGCGFFGSPSNMDLCSKCYRGICAEEA) form an A20-type zinc finger. Positions 22, 26, 38, 41, 117, 120, 131, 133, 138, 141, 147, and 149 each coordinate Zn(2+). The AN1-type zinc finger occupies 111-157 (PARTNRCLCCNKKVGIMGFKCKCGSTFCGEHRYPETHDCSFDFKEVG).

In terms of biological role, may be involved in environmental stress response. In Arabidopsis thaliana (Mouse-ear cress), this protein is Zinc finger A20 and AN1 domain-containing stress-associated protein 9 (SAP9).